A 61-amino-acid chain; its full sequence is Large ribosomal subunit protein eL37 (61 aa).

Positions 19, 22, 34, and 37 each coordinate Zn(2+). The C4-type zinc finger occupies 19-37; the sequence is CRRCGRNAYNVSKHYCAAC.

Belongs to the eukaryotic ribosomal protein eL37 family. Zn(2+) serves as cofactor.

Binds to the 23S rRNA. This chain is Large ribosomal subunit protein eL37, found in Saccharolobus islandicus (strain L.S.2.15 / Lassen #1) (Sulfolobus islandicus).